Here is a 199-residue protein sequence, read N- to C-terminus: Probable GTP-binding protein EngB (199 aa).

The EngB-type G domain maps to 28 to 199; that stretch reads DLPEIALAGR…DSWDAILEQV (172 aa). GTP contacts are provided by residues 36–43, 63–67, 81–84, 148–151, and 180–182; these read GRSNVGKS, GKTQL, DVPG, TKAD, and FSS. Positions 43 and 65 each coordinate Mg(2+).

The protein belongs to the TRAFAC class TrmE-Era-EngA-EngB-Septin-like GTPase superfamily. EngB GTPase family. Mg(2+) serves as cofactor.

In terms of biological role, necessary for normal cell division and for the maintenance of normal septation. The protein is Probable GTP-binding protein EngB of Streptococcus pyogenes serotype M18 (strain MGAS8232).